Here is a 300-residue protein sequence, read N- to C-terminus: Cation-efflux pump FieF (300 aa).

Helical transmembrane passes span 12-32, 39-59, 82-102, and 114-134; these read AALA…FAWW, ILAA…NLLV, AALA…LTGI, and PLVG…LVTF. Residues Asp-45 and Asp-49 each contribute to the Zn(2+) site. Residues His-153 and Asp-157 each contribute to the Zn(2+) site. Helical transmembrane passes span 156–176 and 182–202; these read SDVM…YGLH and FALG…YEAI.

Belongs to the cation diffusion facilitator (CDF) transporter (TC 2.A.4) family. FieF subfamily. As to quaternary structure, homodimer.

It localises to the cell inner membrane. The catalysed reaction is Zn(2+)(in) + H(+)(out) = Zn(2+)(out) + H(+)(in). It catalyses the reaction Cd(2+)(in) + H(+)(out) = Cd(2+)(out) + H(+)(in). It carries out the reaction Fe(2+)(in) + H(+)(out) = Fe(2+)(out) + H(+)(in). Functionally, divalent metal cation transporter which exports Zn(2+), Cd(2+) and possibly Fe(2+). May be involved in zinc and iron detoxification by efflux. This is Cation-efflux pump FieF from Cronobacter sakazakii (strain ATCC BAA-894) (Enterobacter sakazakii).